The following is a 909-amino-acid chain: Protein translocase subunit SecA (909 aa).

Residues Q87 and 105–109 (GEGKT) contribute to the ATP site. Residues 246-265 (LEQQEKEDEEGKNGDGDYTI) form a disordered region. The segment covering 254-265 (EEGKNGDGDYTI) has biased composition (basic and acidic residues). An ATP-binding site is contributed by D512. Basic and acidic residues predominate over residues 834–858 (ESDVEAVEEQRRQADEQPKQYEHET). The disordered stretch occupies residues 834 to 899 (ESDVEAVEEQ…NDPCPCGSGL (66 aa)). Over residues 859–875 (ASATQAPEQAPEAAPAA) the composition is skewed to low complexity. The Zn(2+) site is built by C893, C895, C904, and H905.

It belongs to the SecA family. In terms of assembly, monomer and homodimer. Part of the essential Sec protein translocation apparatus which comprises SecA, SecYEG and auxiliary proteins SecDF-YajC and YidC. The cofactor is Zn(2+).

The protein resides in the cell inner membrane. Its subcellular location is the cytoplasm. It carries out the reaction ATP + H2O + cellular proteinSide 1 = ADP + phosphate + cellular proteinSide 2.. Part of the Sec protein translocase complex. Interacts with the SecYEG preprotein conducting channel. Has a central role in coupling the hydrolysis of ATP to the transfer of proteins into and across the cell membrane, serving both as a receptor for the preprotein-SecB complex and as an ATP-driven molecular motor driving the stepwise translocation of polypeptide chains across the membrane. This Pseudoalteromonas atlantica (strain T6c / ATCC BAA-1087) protein is Protein translocase subunit SecA.